Reading from the N-terminus, the 2545-residue chain is Methylphloroacetophenone synthase (2545 aa).

Positions 8 to 261 (AFGALAPWPA…HVAIHEGIPQ (254 aa)) are N-terminal acylcarrier protein transacylase (SAT) domain. The 416-residue stretch at 383–798 (KDAIAIIGMG…GSNAAMIVLE (416 aa)) folds into the Ketosynthase family 3 (KS3) domain. Catalysis depends on for beta-ketoacyl synthase activity residues cysteine 547, histidine 682, and histidine 721. Positions 914 to 1218 (LCFGGQVSDR…VSLQLNKPNS (305 aa)) are malonyl-CoA:ACP transacylase (MAT) domain. Residue serine 1001 is the For acyl/malonyl transferase activity of the active site. The interval 1293 to 1423 (LPAVLIRLKS…GTVNLKVADD (131 aa)) is N-terminal hotdog fold. The region spanning 1293-1605 (LPAVLIRLKS…FTDIRRPVPI (313 aa)) is the PKS/mFAS DH domain. A product template (PT) domain region spans residues 1296-1604 (VLIRLKSFDS…NFTDIRRPVP (309 aa)). Residues 1449–1605 (RSESLRGNVL…FTDIRRPVPI (157 aa)) form a C-terminal hotdog fold region. Residues 1657 to 1731 (TSIYEDICGL…SLVDYLHGKG (75 aa)) enclose the Carrier domain. Serine 1691 carries the O-(pantetheine 4'-phosphoryl)serine modification. The span at 1748 to 1768 (SSSHAISTGASSPPDSSGASA) shows a compositional bias: low complexity. Residues 1748-1773 (SSSHAISTGASSPPDSSGASAMTTPP) are disordered. The segment at 1931 to 2163 (FGASETKLLN…GFKHVSWTDG (233 aa)) is methyltransferase (CMeT) domain. The tract at residues 2198–2544 (AGVPMEEVVW…YDFICRQLGM (347 aa)) is claisen cyclase (CLC) domain. Catalysis depends on for thioesterase activity residues serine 2321, aspartate 2481, and histidine 2513.

Its function is as follows. Methylphloroacetophenone synthase; part of the gene cluster that mediates the biosynthesis of usnic acid, a dibenzofuran lichen product possessing a broad spectrum of biological activities. Two genes, mpas and mpao, comprise the usnic acid biosynthetic gene cluster with a single post-PKS enzyme, the methylphloracetophenone oxidase (mpao). The methylphloroacetophenone synthase (mpas) is a non-reducing polyketide synthase that produces methylphloracetophenone from acetate via a methylated tetraketide intermediate. The methylphloroacetophenone oxidase then carries out the oxidative dimerization of methylphloracetophenone to usnic acid. The polypeptide is Methylphloroacetophenone synthase (Cladonia uncialis (Cup lichen)).